The primary structure comprises 504 residues: ATP synthase subunit alpha, chloroplastic (504 aa).

Residue 170-177 (GDRQTGKT) coordinates ATP.

Belongs to the ATPase alpha/beta chains family. F-type ATPases have 2 components, CF(1) - the catalytic core - and CF(0) - the membrane proton channel. CF(1) has five subunits: alpha(3), beta(3), gamma(1), delta(1), epsilon(1). CF(0) has four main subunits: a, b, b' and c.

The protein resides in the plastid. It localises to the chloroplast thylakoid membrane. The enzyme catalyses ATP + H2O + 4 H(+)(in) = ADP + phosphate + 5 H(+)(out). In terms of biological role, produces ATP from ADP in the presence of a proton gradient across the membrane. The alpha chain is a regulatory subunit. The protein is ATP synthase subunit alpha, chloroplastic of Hordeum vulgare (Barley).